The following is a 334-amino-acid chain: Protein POLAR-like 1 (334 aa).

The segment covering 53–63 (IRTSSEDDHHR) has biased composition (basic and acidic residues). A disordered region spans residues 53–74 (IRTSSEDDHHRVGQFSDSPPPT). Positions 273-300 (ETRQQEEIKELEIALDDAKQRLHLKETE) form a coiled coil.

It localises to the cytoplasm. It is found in the cell cortex. Its function is as follows. Acts as a stomatal lineage scaffold which regulates subcellular localization and transient polarization of kinases (e.g. ASK7/BIN2 and ASK3/SK12) involved in asymmetric cell division (ACD) in a BASL-dependent manner. The protein is Protein POLAR-like 1 of Arabidopsis thaliana (Mouse-ear cress).